The primary structure comprises 437 residues: Sodium/bile acid cotransporter 4 (437 aa).

Over 1–103 the chain is Extracellular; the sequence is MDGNDNVTLL…LPFWDTPLNH (103 aa). N-linked (GlcNAc...) asparagine glycosylation is found at asparagine 6, asparagine 18, and asparagine 24. Positions 37-82 are disordered; sequence APASSAGPGPGLSLGPGPSFGFSPGPTPTPEPTTSGLAGGAASHGP. The span at 51–60 shows a compositional bias: low complexity; sequence GPGPSFGFSP. Residues 104–124 traverse the membrane as a helical segment; that stretch reads GLNVFVGAALCITMLGLGCTV. Residues 125–140 are Cytoplasmic-facing; sequence DVNHFGAHVRRPVGAL. Residues 141-161 traverse the membrane as a helical segment; it reads LAALCQFGLLPLLAFLLALAF. Residues 162–197 are Extracellular-facing; that stretch reads KLDEVAAVAVLLCGCCPGGNLSNLMSLLVDGDMNLS. N-linked (GlcNAc...) asparagine glycans are attached at residues asparagine 181 and asparagine 195. A helical membrane pass occupies residues 198 to 218; sequence IIMTISSTLLALVLMPLCLWI. The Cytoplasmic segment spans residues 219–233; sequence YSWAWINTPIVQLLP. The chain crosses the membrane as a helical span at residues 234 to 254; that stretch reads LGTVTLTLCSTLIPIGLGVFI. Topologically, residues 255–267 are extracellular; that stretch reads RYKYSRVADYIVK. A helical membrane pass occupies residues 268–288; the sequence is VSLWSLLVTLVVLFIMTGTML. The Cytoplasmic segment spans residues 289–291; the sequence is GPE. Residues 292–312 traverse the membrane as a helical segment; the sequence is LLASIPAAVYVIAIFMPLAGY. Topologically, residues 313 to 360 are extracellular; the sequence is ASGYGLATLFHLPPNCKRTVCLETGSQNVQLCTAILKLAFPPQFIGSM. Residues 361 to 381 traverse the membrane as a helical segment; the sequence is YMFPLLYALFQSAEAGIFVLI. The Cytoplasmic segment spans residues 382 to 437; it reads YKMYGSEMLHKRDPLDEDEDTDISYKKLKEEEMADTSYGTVKAENIIMMETAQTSL.

Belongs to the bile acid:sodium symporter (BASS) (TC 2.A.28) family. Post-translationally, activated following N-terminal proteolytic cleavage by thrombin and/or proteases. In terms of tissue distribution, highly expressed in brain and small intestine, and moderately expressed in colon, heart, prostate, and testis. Very low levels were detected in kidney, liver, ovary, placenta, spleen, and thymus.

The protein resides in the cell membrane. Transporter for bile acids. In Homo sapiens (Human), this protein is Sodium/bile acid cotransporter 4 (SLC10A4).